An 807-amino-acid polypeptide reads, in one-letter code: Ribosome biogenesis protein ERB1 (807 aa).

The tract at residues 1–112 (MMAKNNKTTE…DTTSLTDRLS (112 aa)) is disordered. Acidic residues-rich tracts occupy residues 21–30 (EESDVEEDED) and 42–56 (EASE…YESA). Ser23 carries the phosphoserine modification. Residues 57-69 (VEEKESSSDKEAQ) show a composition bias toward basic and acidic residues. A phosphoserine mark is found at Ser72 and Ser76. Acidic residues predominate over residues 86 to 102 (EEEGDEEEDYDSSEFSD). Lys127 is covalently cross-linked (Glycyl lysine isopeptide (Lys-Gly) (interchain with G-Cter in ubiquitin)). Phosphoserine is present on residues Ser146 and Ser149. Residues 265–383 (RFVPSKNEAK…LRKVPGYGES (119 aa)) form a required for interaction with NOP7 region. The tract at residues 383–419 (SIRERFERSLDLYLAPRVRKNKLNIDPNSLIPELPSP) is required for interaction with YTM1. Position 418 is a phosphoserine (Ser418). 7 WD repeats span residues 435-474 (GHKG…EVYR), 483-523 (NPDD…YDIE), 592-634 (SCKK…TQSP), 637-675 (KSKG…LVKK), 678-717 (PGAR…TPYK), 721-760 (YHEK…DMMK), and 776-807 (INSL…LWTT).

The protein belongs to the WD repeat BOP1/ERB1 family. Component of the NOP7 complex, composed of ERB1, NOP7 and YTM1. The complex is held together by ERB1, which interacts with NOP7 via its N-terminal domain and with YTM1 via a high-affinity interaction between the seven-bladed beta-propeller domains of the 2 proteins. The NOP7 complex associates with the 66S pre-ribosome.

The protein resides in the nucleus. Its subcellular location is the nucleolus. The protein localises to the nucleoplasm. Its function is as follows. Component of the NOP7 complex, which is required for maturation of the 25S and 5.8S ribosomal RNAs and formation of the 60S ribosome. In Saccharomyces cerevisiae (strain YJM789) (Baker's yeast), this protein is Ribosome biogenesis protein ERB1.